The following is a 316-amino-acid chain: MST50-interacting protein 11 (316 aa).

WD repeat units follow at residues 13–53 (GHNG…TSYG), 61–100 (GHSHIVSDCVISSDGAYALSASWDKTLRLWELATGTTTRR), 103–142 (GHTNDVLSVSFSADNRQIVSGSRDRSIKLWNTLGDCKYTI), 146–187 (GHSE…LQTD), 190–229 (GHTGYINTVTISPDGSLCASGGKDGTTMLWDLNESKHLYS), 231–269 (NANDEIHALVFSPNRYWLCAATASSIIIFDLEKKSKVDE), and 281–316 (SREPECISLAWSADGQTLFAGYTDNIIRAWGVMSRA).

The protein belongs to the WD repeat G protein beta family. Ribosomal protein RACK1 subfamily. Interacts with MST50 and MCK1.

Functionally, involved in regulating the cell wall integrity and MPS1 activation via its interaction with the MAPKKK MCK1. The sequence is that of MST50-interacting protein 11 from Pyricularia oryzae (strain 70-15 / ATCC MYA-4617 / FGSC 8958) (Rice blast fungus).